The following is a 688-amino-acid chain: UvrABC system protein B (688 aa).

The 384-residue stretch at glycine 31–glutamine 414 folds into the Helicase ATP-binding domain. Glycine 44–serine 51 contacts ATP. Residues tyrosine 97–isoleucine 120 carry the Beta-hairpin motif. The Helicase C-terminal domain maps to glutamine 434–threonine 600. The disordered stretch occupies residues leucine 614–isoleucine 633. A UVR domain is found at glutamate 642–aspartate 677.

Belongs to the UvrB family. In terms of assembly, forms a heterotetramer with UvrA during the search for lesions. Interacts with UvrC in an incision complex.

It is found in the cytoplasm. The UvrABC repair system catalyzes the recognition and processing of DNA lesions. A damage recognition complex composed of 2 UvrA and 2 UvrB subunits scans DNA for abnormalities. Upon binding of the UvrA(2)B(2) complex to a putative damaged site, the DNA wraps around one UvrB monomer. DNA wrap is dependent on ATP binding by UvrB and probably causes local melting of the DNA helix, facilitating insertion of UvrB beta-hairpin between the DNA strands. Then UvrB probes one DNA strand for the presence of a lesion. If a lesion is found the UvrA subunits dissociate and the UvrB-DNA preincision complex is formed. This complex is subsequently bound by UvrC and the second UvrB is released. If no lesion is found, the DNA wraps around the other UvrB subunit that will check the other stand for damage. This is UvrABC system protein B from Leifsonia xyli subsp. xyli (strain CTCB07).